A 186-amino-acid polypeptide reads, in one-letter code: Calcium-binding protein NCSA (186 aa).

EF-hand domains follow at residues 40 to 58, 66 to 93, 94 to 129, and 142 to 177; these read SGTI…MGVG, LFNV…ITRG, TPEE…MYKL, and DPHD…NPDI. The Ca(2+) site is built by aspartate 107, aspartate 109, asparagine 111, tyrosine 113, glutamate 118, aspartate 155, aspartate 157, aspartate 159, tyrosine 161, and glutamate 166.

The protein belongs to the recoverin family.

Its function is as follows. May prevent cells from entering development prematurely in the presence of environmental nutrients. The chain is Calcium-binding protein NCSA (ncsA) from Dictyostelium discoideum (Social amoeba).